Reading from the N-terminus, the 709-residue chain is Phosphate acetyltransferase (709 aa).

Residues E389–L709 form a phosphate acetyltransferase region.

This sequence in the N-terminal section; belongs to the CobB/CobQ family. In the C-terminal section; belongs to the phosphate acetyltransferase and butyryltransferase family. Homohexamer.

Its subcellular location is the cytoplasm. It carries out the reaction acetyl-CoA + phosphate = acetyl phosphate + CoA. The protein operates within metabolic intermediate biosynthesis; acetyl-CoA biosynthesis; acetyl-CoA from acetate: step 2/2. Its function is as follows. Involved in acetate metabolism. This Buchnera aphidicola subsp. Schizaphis graminum (strain Sg) protein is Phosphate acetyltransferase (pta).